The chain runs to 125 residues: Meiotically up-regulated gene 112 protein (125 aa).

It is found in the golgi apparatus. Functionally, has a role in meiosis. This chain is Meiotically up-regulated gene 112 protein (mug112), found in Schizosaccharomyces pombe (strain 972 / ATCC 24843) (Fission yeast).